A 368-amino-acid polypeptide reads, in one-letter code: Transmembrane protein 26 (368 aa).

3 helical membrane passes run 4 to 24, 36 to 56, and 65 to 85; these read LVFLNALATRLLFLLHSLVGV, YWLLALLNLLLFLETALTLKF, and FSPAIFLYLISIVPSLWLLEL. Asparagine 110 carries an N-linked (GlcNAc...) asparagine glycan. The next 5 helical transmembrane spans lie at 150–170, 177–197, 208–228, 257–277, and 281–301; these read QTFLLMLIIGRWLLPIGGGIT, LLLMFVGTAADILEFTSETLE, VYAILVIWTWSMLQFPLDLAV, IGISVFIQDGPFLVVRLILMT, and VINQMLVFFAAKNFLVVVLQL. Residues 324 to 368 form a disordered region; the sequence is GEHGCRAQTSESGPSQRDWQNESKEGLAIPLRGSPVTSDDSHHTP. The span at 330-341 shows a compositional bias: polar residues; sequence AQTSESGPSQRD.

It is found in the membrane. The sequence is that of Transmembrane protein 26 (TMEM26) from Homo sapiens (Human).